The chain runs to 116 residues: Large ribosomal subunit protein bL20 (116 aa).

It belongs to the bacterial ribosomal protein bL20 family.

Functionally, binds directly to 23S ribosomal RNA and is necessary for the in vitro assembly process of the 50S ribosomal subunit. It is not involved in the protein synthesizing functions of that subunit. The chain is Large ribosomal subunit protein bL20 from Hydrogenobaculum sp. (strain Y04AAS1).